A 331-amino-acid chain; its full sequence is Ketol-acid reductoisomerase (NADP(+)) (331 aa).

The 181-residue stretch at 2–182 (AKMYYDKDAD…GGTRAGVIET (181 aa)) folds into the KARI N-terminal Rossmann domain. Residues 25 to 28 (FGSQ), Ser-51, Ser-53, and 83 to 86 (DEKQ) each bind NADP(+). Residue His-108 is part of the active site. Gly-134 is a binding site for NADP(+). The 146-residue stretch at 183-328 (TFKEETETDL…KGLREMMAWI (146 aa)) folds into the KARI C-terminal knotted domain. Residues Asp-191, Glu-195, Glu-227, and Glu-231 each contribute to the Mg(2+) site. Ser-252 contacts substrate.

The protein belongs to the ketol-acid reductoisomerase family. Requires Mg(2+) as cofactor.

The enzyme catalyses (2R)-2,3-dihydroxy-3-methylbutanoate + NADP(+) = (2S)-2-acetolactate + NADPH + H(+). It carries out the reaction (2R,3R)-2,3-dihydroxy-3-methylpentanoate + NADP(+) = (S)-2-ethyl-2-hydroxy-3-oxobutanoate + NADPH + H(+). The protein operates within amino-acid biosynthesis; L-isoleucine biosynthesis; L-isoleucine from 2-oxobutanoate: step 2/4. Its pathway is amino-acid biosynthesis; L-valine biosynthesis; L-valine from pyruvate: step 2/4. Its function is as follows. Involved in the biosynthesis of branched-chain amino acids (BCAA). Catalyzes an alkyl-migration followed by a ketol-acid reduction of (S)-2-acetolactate (S2AL) to yield (R)-2,3-dihydroxy-isovalerate. In the isomerase reaction, S2AL is rearranged via a Mg-dependent methyl migration to produce 3-hydroxy-3-methyl-2-ketobutyrate (HMKB). In the reductase reaction, this 2-ketoacid undergoes a metal-dependent reduction by NADPH to yield (R)-2,3-dihydroxy-isovalerate. The polypeptide is Ketol-acid reductoisomerase (NADP(+)) (Thermoanaerobacter sp. (strain X514)).